A 630-amino-acid chain; its full sequence is 1,4-alpha-glucan branching enzyme GlgB (630 aa).

Catalysis depends on D308, which acts as the Nucleophile. E361 serves as the catalytic Proton donor.

It belongs to the glycosyl hydrolase 13 family. GlgB subfamily. Monomer.

The catalysed reaction is Transfers a segment of a (1-&gt;4)-alpha-D-glucan chain to a primary hydroxy group in a similar glucan chain.. The protein operates within glycan biosynthesis; glycogen biosynthesis. Catalyzes the formation of the alpha-1,6-glucosidic linkages in glycogen by scission of a 1,4-alpha-linked oligosaccharide from growing alpha-1,4-glucan chains and the subsequent attachment of the oligosaccharide to the alpha-1,6 position. In Halothermothrix orenii (strain H 168 / OCM 544 / DSM 9562), this protein is 1,4-alpha-glucan branching enzyme GlgB.